The primary structure comprises 748 residues: Acyl-coenzyme A oxidase (748 aa).

This sequence belongs to the acyl-CoA oxidase family. As to quaternary structure, homooctamer. FAD is required as a cofactor.

The protein resides in the peroxisome. It catalyses the reaction a 2,3-saturated acyl-CoA + O2 = a (2E)-enoyl-CoA + H2O2. The protein operates within lipid metabolism; peroxisomal fatty acid beta-oxidation. The polypeptide is Acyl-coenzyme A oxidase (POX1) (Saccharomyces cerevisiae (strain ATCC 204508 / S288c) (Baker's yeast)).